Here is a 500-residue protein sequence, read N- to C-terminus: Low-density lipoprotein receptor-related protein 11 (500 aa).

An N-terminal signal peptide occupies residues 1-37 (MASVAQESAGSQRRLPPRHGALRGLLLLCLWLPSGRA). Residues 38–450 (ALPPAAPLSE…GGEHPAPETG (413 aa)) lie on the Extracellular side of the membrane. In terms of domain architecture, MANSC spans 99–184 (AMPDAIIRTK…FALHSGYSSY (86 aa)). 2 N-linked (GlcNAc...) asparagine glycosylation sites follow: N164 and N291. One can recognise a PKD domain in the interval 210 to 305 (PLSKAGQDVV…VLRAAYSTGG (96 aa)). The 37-residue stretch at 309-345 (TCSRYHFFCDDGCCIDITLACDGVQQCPDGSDEDFCQ) folds into the LDL-receptor class A domain. Intrachain disulfides connect C310/C322, C317/C335, and C329/C344. The segment at 358 to 445 (AASPALPRTT…KGDGGGGEHP (88 aa)) is disordered. The N-linked (GlcNAc...) asparagine glycan is linked to N401. The helical transmembrane segment at 451–473 (AVLPLALGLAITALLLLMVACRL) threads the bilayer. The Cytoplasmic portion of the chain corresponds to 474-500 (RLVKQKLKKARPITSEESDYLINGMYL). S491 carries the phosphoserine modification.

It belongs to the LDLR family.

Its subcellular location is the membrane. This Homo sapiens (Human) protein is Low-density lipoprotein receptor-related protein 11 (LRP11).